Here is a 233-residue protein sequence, read N- to C-terminus: Short chain dehydrogenase trt9 (233 aa).

Residues aspartate 33, arginine 95, tyrosine 127, lysine 131, and valine 160 each coordinate NADP(+). Tyrosine 127 (proton donor) is an active-site residue. Lysine 131 (lowers pKa of active site Tyr) is an active-site residue.

Belongs to the short-chain dehydrogenases/reductases (SDR) family.

It participates in secondary metabolite biosynthesis; terpenoid biosynthesis. Functionally, short chain dehydrogenase; part of the gene cluster that mediates the biosynthesis of terretonin, a fungal meroterpenoid that acts as a mycotoxin. The first step of the pathway is the synthesis of 3,5-dimethylorsellinic acid (DMOA) by the polyketide synthase trt4. DMOA is then prenylated into farnesyl-DMOA by the polyprenyl transferase trt2. Methylation by the methyltransferase trt5 then leads to farnesyl-DMOA methyl ester which is further subject to epoxidation by the FAD-dependent monooxygenase trt8 to yield epoxyfarnesyl-DMOA methyl ester. Cyclization of epoxyfarnesyl-DMOA methyl ester by the terpene cyclase trt1 leads to a tetracycle intermediate which is in turn converted to preterretonin. Dehydrogenase trt9 comes next to transform preterretonin to preterrenoid. The FAD-dependent monooxygenase trt3 is then required for the C-hydroxylation at C16 of preterrenoid to yield terrenoid. The cytochrome P450 trt6 catalyzes three successive oxidations to transform terrenoid into an unstable intermediate, which then undergoes the D-ring expansion and unusual rearrangement of the methoxy group to afford the core skeleton of terretonin. Trt14 catalyzes the D-ring expansion of terretonin involving intramolecular methoxy rearrangement as well as the hydrolysis of the expanded D-ring and the methyl ester moiety. Finally, the nonheme iron-dependent dioxygenase trt7 accomplishes the last two oxidation reactions steps to complete the biosynthesis of terretonin. Terretonin C is produced via spontaneous decarboxylation of the terretonin precursor. Another shunt product of the terretonin biosynthesis is dihydrofarnesyl-DMOA, derived from epoxyfarnesyl-DMOA through hydrolysis of the epoxide. The chain is Short chain dehydrogenase trt9 from Aspergillus terreus (strain NIH 2624 / FGSC A1156).